Consider the following 200-residue polypeptide: Isochorismatase family protein 2A (200 aa).

It belongs to the isochorismatase family.

This chain is Isochorismatase family protein 2A, found in Dictyostelium discoideum (Social amoeba).